Reading from the N-terminus, the 38-residue chain is Photosystem I reaction center subunit VIII (38 aa).

Residues 12 to 32 traverse the membrane as a helical segment; sequence WILIPIIGWLMPAVVMGLLFL.

The protein belongs to the PsaI family.

It is found in the cellular thylakoid membrane. Its function is as follows. May help in the organization of the PsaL subunit. This chain is Photosystem I reaction center subunit VIII, found in Gloeothece citriformis (strain PCC 7424) (Cyanothece sp. (strain PCC 7424)).